The primary structure comprises 414 residues: Tyrosine--tRNA ligase (414 aa).

Positions 57–66 match the 'HIGH' region motif; it reads PSAPDVHIGH. The 'KMSKS' region signature appears at 241-245; it reads KMSKS. Residue lysine 244 participates in ATP binding. An S4 RNA-binding domain is found at 352 to 413; it reads VPLIDLLVTL…GKRKFAKLSL (62 aa).

Belongs to the class-I aminoacyl-tRNA synthetase family. TyrS type 2 subfamily. Homodimer.

The protein localises to the cytoplasm. It carries out the reaction tRNA(Tyr) + L-tyrosine + ATP = L-tyrosyl-tRNA(Tyr) + AMP + diphosphate + H(+). Its function is as follows. Catalyzes the attachment of tyrosine to tRNA(Tyr) in a two-step reaction: tyrosine is first activated by ATP to form Tyr-AMP and then transferred to the acceptor end of tRNA(Tyr). The sequence is that of Tyrosine--tRNA ligase from Shouchella clausii (strain KSM-K16) (Alkalihalobacillus clausii).